Consider the following 67-residue polypeptide: Bowman-Birk type proteinase inhibitor A6 (67 aa).

6 disulfides stabilise this stretch: Cys9-Cys66, Cys10-Cys29, Cys13-Cys62, Cys16-Cys27, Cys36-Cys43, and Cys40-Cys54.

The protein belongs to the Bowman-Birk serine protease inhibitor family. Expressed in bulb (at protein level).

Functionally, serine protease inhibitor. Strongly inhibits trypsin (Ki = 4 nM) and elastase (Ki = 4.8 nM). Also inhibits chymotrypsin with a Ki of 22 nM. Does not inhibit bacterial subtilisin. In Hyacinthus orientalis (Common hyacinth), this protein is Bowman-Birk type proteinase inhibitor A6.